The chain runs to 602 residues: Elongation factor 4 (602 aa).

The tr-type G domain maps to 7–189 (KFIRNFSIIA…QLVVAIPPPV (183 aa)). GTP is bound by residues 19 to 24 (DHGKST) and 136 to 139 (NKID).

It belongs to the TRAFAC class translation factor GTPase superfamily. Classic translation factor GTPase family. LepA subfamily.

It localises to the cell inner membrane. It carries out the reaction GTP + H2O = GDP + phosphate + H(+). Required for accurate and efficient protein synthesis under certain stress conditions. May act as a fidelity factor of the translation reaction, by catalyzing a one-codon backward translocation of tRNAs on improperly translocated ribosomes. Back-translocation proceeds from a post-translocation (POST) complex to a pre-translocation (PRE) complex, thus giving elongation factor G a second chance to translocate the tRNAs correctly. Binds to ribosomes in a GTP-dependent manner. The chain is Elongation factor 4 from Coxiella burnetii (strain Dugway 5J108-111).